Here is a 434-residue protein sequence, read N- to C-terminus: Perilipin-3 (434 aa).

Residues 1 to 22 form a disordered region; sequence MSADGAEADGSTQVTVEEPVQQ. Ser2 bears the N-acetylserine mark. Position 31 is a phosphoserine (Ser31). Position 65 is an N6-acetyllysine (Lys65). Residue Ser91 is modified to Phosphoserine. Lys122 participates in a covalent cross-link: Glycyl lysine isopeptide (Lys-Gly) (interchain with G-Cter in SUMO1). A phosphoserine mark is found at Ser130 and Ser148. Thr170 is modified (phosphothreonine). Residues Ser175 and Ser179 each carry the phosphoserine modification. Phosphothreonine is present on Thr216. Ser217 and Ser241 each carry phosphoserine. Phosphotyrosine is present on Tyr251. Coiled-coil stretches lie at residues 252-277 and 353-377; these read EHSLGKLRATKQRAQEALLQLSQVLS and TNVKDQVQQARRQVEDLQATFSSIH.

The protein belongs to the perilipin family. In terms of assembly, homooligomer. Interacts with M6PR (via the cytoplasmic domain). Interacts with IGF2R (via the cytoplasmic domain). May exist as a homodimer. Post-translationally, phosphorylation at Tyr-251 by isoform 1 of CHKA (CHKalpha2) promotes dissociation from lipid droplets: dissociation is followed by recruitment of autophagosome machinery to lipid droplets and subsequent lipid droplet lipolysis.

It localises to the lipid droplet. The protein localises to the endosome membrane. The protein resides in the cytoplasm. Structural component of lipid droplets, which is required for the formation and maintenance of lipid storage droplets. Required for the transport of mannose 6-phosphate receptors (MPR) from endosomes to the trans-Golgi network. In Homo sapiens (Human), this protein is Perilipin-3 (PLIN3).